The chain runs to 371 residues: 4-hydroxy-3-methylbut-2-en-1-yl diphosphate synthase (flavodoxin) (371 aa).

4 residues coordinate [4Fe-4S] cluster: Cys-271, Cys-274, Cys-306, and Glu-313.

The protein belongs to the IspG family. [4Fe-4S] cluster is required as a cofactor.

The enzyme catalyses (2E)-4-hydroxy-3-methylbut-2-enyl diphosphate + oxidized [flavodoxin] + H2O + 2 H(+) = 2-C-methyl-D-erythritol 2,4-cyclic diphosphate + reduced [flavodoxin]. The protein operates within isoprenoid biosynthesis; isopentenyl diphosphate biosynthesis via DXP pathway; isopentenyl diphosphate from 1-deoxy-D-xylulose 5-phosphate: step 5/6. Functionally, converts 2C-methyl-D-erythritol 2,4-cyclodiphosphate (ME-2,4cPP) into 1-hydroxy-2-methyl-2-(E)-butenyl 4-diphosphate. This is 4-hydroxy-3-methylbut-2-en-1-yl diphosphate synthase (flavodoxin) from Actinobacillus succinogenes (strain ATCC 55618 / DSM 22257 / CCUG 43843 / 130Z).